A 406-amino-acid polypeptide reads, in one-letter code: Dual-specificity RNA methyltransferase RlmN (406 aa).

The active-site Proton acceptor is glutamate 119. A Radical SAM core domain is found at 125-370 (DKGRGTLCVS…AMVRRTRGDD (246 aa)). A disulfide bridge connects residues cysteine 132 and cysteine 375. The [4Fe-4S] cluster site is built by cysteine 139, cysteine 143, and cysteine 146. Residues 192-193 (GE), serine 224, 246-248 (SLH), and asparagine 332 contribute to the S-adenosyl-L-methionine site. Cysteine 375 functions as the S-methylcysteine intermediate in the catalytic mechanism.

It belongs to the radical SAM superfamily. RlmN family. The cofactor is [4Fe-4S] cluster.

It is found in the cytoplasm. It catalyses the reaction adenosine(2503) in 23S rRNA + 2 reduced [2Fe-2S]-[ferredoxin] + 2 S-adenosyl-L-methionine = 2-methyladenosine(2503) in 23S rRNA + 5'-deoxyadenosine + L-methionine + 2 oxidized [2Fe-2S]-[ferredoxin] + S-adenosyl-L-homocysteine. The enzyme catalyses adenosine(37) in tRNA + 2 reduced [2Fe-2S]-[ferredoxin] + 2 S-adenosyl-L-methionine = 2-methyladenosine(37) in tRNA + 5'-deoxyadenosine + L-methionine + 2 oxidized [2Fe-2S]-[ferredoxin] + S-adenosyl-L-homocysteine. Its function is as follows. Specifically methylates position 2 of adenine 2503 in 23S rRNA and position 2 of adenine 37 in tRNAs. m2A2503 modification seems to play a crucial role in the proofreading step occurring at the peptidyl transferase center and thus would serve to optimize ribosomal fidelity. This Xylella fastidiosa (strain Temecula1 / ATCC 700964) protein is Dual-specificity RNA methyltransferase RlmN.